Here is a 263-residue protein sequence, read N- to C-terminus: MTSPLPFVAVVPARLASTRLPNKPLADLGGKPMVVRVAERAREAGAQQVLVASDAQRVLDAVREHGFDAVLTRADHPSGTDRLAEVAAKLGFDDDTIVVNVQGDEPLIDPQLVRDVASHLAAHPSCAIATAAHPIHEAHEVFNPNYVKVVLDAHGVALYFSRAPIPWSRDAYLPHWPNVAAMPAPTCPVYRHIGLYAYRARFLRTYPTLAQAPIEAAEQLEQLRAMWHGERIAVRVTEHAPEAGIDTPADLERVQALFRSRAK.

It belongs to the KdsB family.

The protein resides in the cytoplasm. It catalyses the reaction 3-deoxy-alpha-D-manno-oct-2-ulosonate + CTP = CMP-3-deoxy-beta-D-manno-octulosonate + diphosphate. It functions in the pathway nucleotide-sugar biosynthesis; CMP-3-deoxy-D-manno-octulosonate biosynthesis; CMP-3-deoxy-D-manno-octulosonate from 3-deoxy-D-manno-octulosonate and CTP: step 1/1. It participates in bacterial outer membrane biogenesis; lipopolysaccharide biosynthesis. Its function is as follows. Activates KDO (a required 8-carbon sugar) for incorporation into bacterial lipopolysaccharide in Gram-negative bacteria. The sequence is that of 3-deoxy-manno-octulosonate cytidylyltransferase from Burkholderia mallei (strain NCTC 10229).